We begin with the raw amino-acid sequence, 268 residues long: Tryptophan synthase alpha chain (268 aa).

Active-site proton acceptor residues include glutamate 49 and aspartate 60.

Belongs to the TrpA family. In terms of assembly, tetramer of two alpha and two beta chains.

The catalysed reaction is (1S,2R)-1-C-(indol-3-yl)glycerol 3-phosphate + L-serine = D-glyceraldehyde 3-phosphate + L-tryptophan + H2O. Its pathway is amino-acid biosynthesis; L-tryptophan biosynthesis; L-tryptophan from chorismate: step 5/5. The alpha subunit is responsible for the aldol cleavage of indoleglycerol phosphate to indole and glyceraldehyde 3-phosphate. The polypeptide is Tryptophan synthase alpha chain (Yersinia pestis bv. Antiqua (strain Antiqua)).